The chain runs to 29 residues: Trypsin inhibitor 1 (29 aa).

3 disulfides stabilise this stretch: cysteine 3–cysteine 20, cysteine 10–cysteine 22, and cysteine 16–cysteine 28.

It belongs to the protease inhibitor I7 (squash-type serine protease inhibitor) family.

Its subcellular location is the secreted. Functionally, inhibits trypsin. The protein is Trypsin inhibitor 1 of Cucurbita maxima (Pumpkin).